A 191-amino-acid polypeptide reads, in one-letter code: COP9 signalosome complex subunit 8 (191 aa).

Positions 6 to 179 (MMAELDEKLL…VSLVPNEQQL (174 aa)) constitute a PCI domain.

Belongs to the CSN8 family. In terms of assembly, component of the CSN complex, probably composed of cops1, cops2, cops3, cops4, cops5, cops6, cops7, cops8 and cops9.

It is found in the cytoplasm. It localises to the nucleus. In terms of biological role, component of the COP9 signalosome complex (CSN), a complex involved in various cellular and developmental processes. The CSN complex is an essential regulator of the ubiquitin (Ubl) conjugation pathway by mediating the deneddylation of the cullin subunits of E3 ligase complexes, leading to modify the Ubl ligase activity. This is COP9 signalosome complex subunit 8 (cops8) from Danio rerio (Zebrafish).